A 213-amino-acid polypeptide reads, in one-letter code: Probable nicotinate-nucleotide adenylyltransferase (213 aa).

The protein belongs to the NadD family.

The enzyme catalyses nicotinate beta-D-ribonucleotide + ATP + H(+) = deamido-NAD(+) + diphosphate. It functions in the pathway cofactor biosynthesis; NAD(+) biosynthesis; deamido-NAD(+) from nicotinate D-ribonucleotide: step 1/1. Catalyzes the reversible adenylation of nicotinate mononucleotide (NaMN) to nicotinic acid adenine dinucleotide (NaAD). The polypeptide is Probable nicotinate-nucleotide adenylyltransferase (Salmonella gallinarum (strain 287/91 / NCTC 13346)).